Here is a 229-residue protein sequence, read N- to C-terminus: Uridylate cyclase (229 aa).

The Guanylate cyclase domain maps to 47-178; the sequence is TVLYADLDGS…RAANYAAKLT (132 aa). Tyrosine 50 is an a ribonucleoside 5'-triphosphate binding site. Mn(2+) contacts are provided by aspartate 52 and aspartate 96. Arginine 97 contacts a ribonucleoside 5'-triphosphate.

This sequence belongs to the adenylyl cyclase class-4/guanylyl cyclase family. Pyrimidine cyclase subfamily. As to quaternary structure, homodimer. Mn(2+) is required as a cofactor.

Its subcellular location is the cytoplasm. The enzyme catalyses UTP = 3',5'-cyclic UMP + diphosphate. Pycsar (pyrimidine cyclase system for antiphage resistance) provides immunity against bacteriophage. The pyrimidine cyclase (PycC) synthesizes cyclic nucleotides in response to infection; these serve as specific second messenger signals. The signals activate the adjacent effector, leading to bacterial cell death and abortive phage infection. A clade B Pycsar system. Functionally, the pyrimidine cyclase gene of a two-gene Pycsar system, generates cyclic UMP (cUMP) from UTP, has little to no activity on ATP, CTP or GTP. Expression of this and adjacent effector BcPycTIR (AC A0A0J5WTU0) probably confers resistance to bacteriophage. The genes are probably only expressed in response to bacteriophage infection. This Burkholderia cepacia (Pseudomonas cepacia) protein is Uridylate cyclase.